The sequence spans 196 residues: Crossover junction endodeoxyribonuclease RuvC (196 aa).

Active-site residues include Asp23, Glu83, and His156. The Mg(2+) site is built by Asp23, Glu83, and His156.

It belongs to the RuvC family. In terms of assembly, homodimer which binds Holliday junction (HJ) DNA. The HJ becomes 2-fold symmetrical on binding to RuvC with unstacked arms; it has a different conformation from HJ DNA in complex with RuvA. In the full resolvosome a probable DNA-RuvA(4)-RuvB(12)-RuvC(2) complex forms which resolves the HJ. Mg(2+) serves as cofactor.

The protein resides in the cytoplasm. The catalysed reaction is Endonucleolytic cleavage at a junction such as a reciprocal single-stranded crossover between two homologous DNA duplexes (Holliday junction).. In terms of biological role, the RuvA-RuvB-RuvC complex processes Holliday junction (HJ) DNA during genetic recombination and DNA repair. Endonuclease that resolves HJ intermediates. Cleaves cruciform DNA by making single-stranded nicks across the HJ at symmetrical positions within the homologous arms, yielding a 5'-phosphate and a 3'-hydroxyl group; requires a central core of homology in the junction. The consensus cleavage sequence is 5'-(A/T)TT(C/G)-3'. Cleavage occurs on the 3'-side of the TT dinucleotide at the point of strand exchange. HJ branch migration catalyzed by RuvA-RuvB allows RuvC to scan DNA until it finds its consensus sequence, where it cleaves and resolves the cruciform DNA. The protein is Crossover junction endodeoxyribonuclease RuvC of Treponema pallidum (strain Nichols).